The sequence spans 492 residues: UDP-N-acetylmuramyl-tripeptide synthetase 2 (492 aa).

Serine 30 is a UDP-N-acetyl-alpha-D-muramoyl-L-alanyl-D-glutamate binding site. ATP is bound at residue 111–117 (GTNGKTT). Residues 154 to 155 (TT), serine 181, glutamine 187, and arginine 189 contribute to the UDP-N-acetyl-alpha-D-muramoyl-L-alanyl-D-glutamate site. N6-carboxylysine is present on lysine 221.

This sequence belongs to the MurCDEF family. MurE subfamily. In terms of processing, carboxylation is probably crucial for Mg(2+) binding and, consequently, for the gamma-phosphate positioning of ATP.

It is found in the cytoplasm. It functions in the pathway cell wall biogenesis; peptidoglycan biosynthesis. Its function is as follows. Catalyzes the addition of an amino acid to the nucleotide precursor UDP-N-acetylmuramoyl-L-alanyl-D-glutamate (UMAG) in the biosynthesis of bacterial cell-wall peptidoglycan. The polypeptide is UDP-N-acetylmuramyl-tripeptide synthetase 2 (Oceanobacillus iheyensis (strain DSM 14371 / CIP 107618 / JCM 11309 / KCTC 3954 / HTE831)).